Here is a 250-residue protein sequence, read N- to C-terminus: tRNA pseudouridine synthase A (250 aa).

The active-site Nucleophile is the Asp52. Residue Tyr111 participates in substrate binding.

This sequence belongs to the tRNA pseudouridine synthase TruA family. In terms of assembly, homodimer.

It catalyses the reaction uridine(38/39/40) in tRNA = pseudouridine(38/39/40) in tRNA. Formation of pseudouridine at positions 38, 39 and 40 in the anticodon stem and loop of transfer RNAs. The protein is tRNA pseudouridine synthase A of Methylobacterium sp. (strain 4-46).